Here is a 419-residue protein sequence, read N- to C-terminus: L-rhamnose isomerase (419 aa).

Mn(2+) contacts are provided by His-262, Asp-294, and Asp-296.

This sequence belongs to the rhamnose isomerase family. Homotetramer. The cofactor is Mn(2+).

The protein localises to the cytoplasm. The catalysed reaction is L-rhamnopyranose = L-rhamnulose. Its pathway is carbohydrate degradation; L-rhamnose degradation; glycerone phosphate from L-rhamnose: step 1/3. Catalyzes the interconversion of L-rhamnose and L-rhamnulose. The protein is L-rhamnose isomerase of Enterobacter sp. (strain 638).